We begin with the raw amino-acid sequence, 198 residues long: Ribonuclease HII 1 (198 aa).

In terms of domain architecture, RNase H type-2 spans 7 to 196 (ELTAGVDEAG…VRAALARAAA (190 aa)). Residues D13, E14, and D105 each coordinate a divalent metal cation.

It belongs to the RNase HII family. Mn(2+) is required as a cofactor. It depends on Mg(2+) as a cofactor.

It is found in the cytoplasm. It carries out the reaction Endonucleolytic cleavage to 5'-phosphomonoester.. Its function is as follows. Endonuclease that specifically degrades the RNA of RNA-DNA hybrids. This Methylibium petroleiphilum (strain ATCC BAA-1232 / LMG 22953 / PM1) protein is Ribonuclease HII 1.